Consider the following 258-residue polypeptide: Peptidase inhibitor 15 (258 aa).

The N-terminal stretch at 1–21 (MIMNSAVSLVILLSLLCEAHT) is a signal peptide. A propeptide spanning residues 22–60 (VVLLNPTDSSLPANNFTDTEAALSTPLESADIPKARRKR) is cleaved from the precursor. N-linked (GlcNAc...) asparagine glycans are attached at residues N36 and N124. One can recognise an SCP domain in the interval 71 to 211 (LDYHNQVRGK…RRAVYLVCNY (141 aa)).

It belongs to the CRISP family. Post-translationally, N-glycosylated. Weakly expressed. Expressed at low level in prostate, mammary gland, salivary gland and thyroid gland.

Its subcellular location is the secreted. Serine protease inhibitor which displays weak inhibitory activity against trypsin. May play a role in facial patterning during embryonic development. The protein is Peptidase inhibitor 15 (Pi15) of Mus musculus (Mouse).